The sequence spans 244 residues: MIVIPAIDLREGRCVRLFRGDFARATVYSDDPIEMAQRWASAGARWLHVVDLDGARLGQPVQHELIERVIRAVPDVAVQVGGGVRTLDAVERLLVGGAARVVIGTAALERPDMLREALARFGVERVVVAVDSRDGWVATHGWETVQAIRVEEVVHRVVLLGVRRVLATDVTRDGTLTRPNLELMGRLAALGVTVIASGGVGSRSDLEALARVPGVEAAIVGRALYEGRVRFERPEDWVIGAEAA.

Asp-8 serves as the catalytic Proton acceptor. The Proton donor role is filled by Asp-131.

The protein belongs to the HisA/HisF family.

Its subcellular location is the cytoplasm. The catalysed reaction is 1-(5-phospho-beta-D-ribosyl)-5-[(5-phospho-beta-D-ribosylamino)methylideneamino]imidazole-4-carboxamide = 5-[(5-phospho-1-deoxy-D-ribulos-1-ylimino)methylamino]-1-(5-phospho-beta-D-ribosyl)imidazole-4-carboxamide. It functions in the pathway amino-acid biosynthesis; L-histidine biosynthesis; L-histidine from 5-phospho-alpha-D-ribose 1-diphosphate: step 4/9. The polypeptide is 1-(5-phosphoribosyl)-5-[(5-phosphoribosylamino)methylideneamino] imidazole-4-carboxamide isomerase (Thermomicrobium roseum (strain ATCC 27502 / DSM 5159 / P-2)).